The following is a 442-amino-acid chain: Protein translocase subunit SecY (442 aa).

10 consecutive transmembrane segments (helical) span residues 29 to 49 (LITIGLLILVRVGIFIPVPDI), 69 to 89 (IFTGGGLSTVGIFALGILPYI), 126 to 146 (YIAFGWCIIQGLGLTVGLLRP), 153 to 173 (PLFIFQTVLAITAGSMFVMWI), 182 to 202 (IGNGASLLIFVNIVATLPQTL), 217 to 237 (ITAVVLLMLVFLVMIVGIVFV), 274 to 294 (VMPIIFASAVLILPSSLAGFA), 320 to 340 (VYTVVYSVMIFFFSYFYASLI), 377 to 397 (LTFLGAIFLSFVATLPIFVEQ), and 400 to 420 (GVTTFQGLGATSLLILVGVAI).

This sequence belongs to the SecY/SEC61-alpha family. Component of the Sec protein translocase complex. Heterotrimer consisting of SecY, SecE and SecG subunits. The heterotrimers can form oligomers, although 1 heterotrimer is thought to be able to translocate proteins. Interacts with the ribosome. Interacts with SecDF, and other proteins may be involved. Interacts with SecA.

The protein localises to the cell inner membrane. Its subcellular location is the cellular thylakoid membrane. Its function is as follows. The central subunit of the protein translocation channel SecYEG. Consists of two halves formed by TMs 1-5 and 6-10. These two domains form a lateral gate at the front which open onto the bilayer between TMs 2 and 7, and are clamped together by SecE at the back. The channel is closed by both a pore ring composed of hydrophobic SecY resides and a short helix (helix 2A) on the extracellular side of the membrane which forms a plug. The plug probably moves laterally to allow the channel to open. The ring and the pore may move independently. The sequence is that of Protein translocase subunit SecY from Synechocystis sp. (strain ATCC 27184 / PCC 6803 / Kazusa).